The sequence spans 210 residues: Proline-rich protein 20G (210 aa).

The span at 1–11 shows a compositional bias: basic residues; sequence MEEPRHSKRPR. The interval 1–82 is disordered; sequence MEEPRHSKRP…GGSWRAGRGR (82 aa). The span at 69–82 shows a compositional bias: gly residues; the sequence is GQRGGGSWRAGRGR.

It belongs to the PRR20 family.

This is Proline-rich protein 20G from Homo sapiens (Human).